Reading from the N-terminus, the 419-residue chain is L-rhamnose isomerase (419 aa).

3 residues coordinate Mn(2+): histidine 262, aspartate 294, and aspartate 296.

This sequence belongs to the rhamnose isomerase family. Homotetramer. The cofactor is Mn(2+).

The protein localises to the cytoplasm. It catalyses the reaction L-rhamnopyranose = L-rhamnulose. It functions in the pathway carbohydrate degradation; L-rhamnose degradation; glycerone phosphate from L-rhamnose: step 1/3. Its function is as follows. Catalyzes the interconversion of L-rhamnose and L-rhamnulose. This is L-rhamnose isomerase from Salmonella agona (strain SL483).